The following is a 298-amino-acid chain: Protoheme IX farnesyltransferase (298 aa).

Transmembrane regions (helical) follow at residues 24–44 (VIQL…PGLP), 49–69 (LQLA…AAAF), 100–120 (LLFS…WVNP), 121–141 (LTMW…TVIL), 149–169 (IVIG…AMAG), 175–195 (ALIL…ALAL), 220–240 (LMVL…YVYG), 244–264 (WLYL…AFYL), and 277–297 (FRFS…DHYL).

Belongs to the UbiA prenyltransferase family. Protoheme IX farnesyltransferase subfamily.

The protein localises to the cell inner membrane. It carries out the reaction heme b + (2E,6E)-farnesyl diphosphate + H2O = Fe(II)-heme o + diphosphate. Its pathway is porphyrin-containing compound metabolism; heme O biosynthesis; heme O from protoheme: step 1/1. Converts heme B (protoheme IX) to heme O by substitution of the vinyl group on carbon 2 of heme B porphyrin ring with a hydroxyethyl farnesyl side group. This chain is Protoheme IX farnesyltransferase, found in Albidiferax ferrireducens (strain ATCC BAA-621 / DSM 15236 / T118) (Rhodoferax ferrireducens).